We begin with the raw amino-acid sequence, 1066 residues long: Phosphatidylinositol 4-kinase PIK1 (1066 aa).

Residues methionine 1 to asparagine 133 enclose the PIK helical domain. Phosphoserine is present on residues serine 10 and serine 236. Disordered stretches follow at residues lysine 218–leucine 240, aspartate 303–asparagine 411, and asparagine 564–methionine 624. The span at asparagine 342–aspartate 356 shows a compositional bias: acidic residues. Composition is skewed to polar residues over residues glutamine 374–asparagine 411 and serine 570–leucine 597. At serine 384 the chain carries Phosphoserine. Threonine 394 carries the phosphothreonine modification. A phosphoserine mark is found at serine 396 and serine 592. The segment covering serine 598–alanine 609 has biased composition (low complexity). A PI3K/PI4K catalytic domain is found at alanine 770–isoleucine 1049. A G-loop region spans residues isoleucine 776 to tyrosine 782. The interval glutamine 915 to asparagine 923 is catalytic loop. The segment at histidine 934 to threonine 958 is activation loop.

Belongs to the PI3/PI4-kinase family. Type III PI4K subfamily. Interacts with FRQ1.

The protein resides in the nucleus. It localises to the golgi apparatus. Its subcellular location is the trans-Golgi network. It catalyses the reaction a 1,2-diacyl-sn-glycero-3-phospho-(1D-myo-inositol) + ATP = a 1,2-diacyl-sn-glycero-3-phospho-(1D-myo-inositol 4-phosphate) + ADP + H(+). Acts on phosphatidylinositol (PI) in the first committed step in the production of the second messenger inositol 1,4,5,-trisphosphate. PIK1 is part of a nuclear phosphoinositide cycle and could control cytokinesis through the actin cytoskeleton. Involved in the response to mating pheromone. The chain is Phosphatidylinositol 4-kinase PIK1 from Saccharomyces cerevisiae (strain ATCC 204508 / S288c) (Baker's yeast).